The sequence spans 110 residues: U1-lycotoxin-Ls1dd (110 aa).

An N-terminal signal peptide occupies residues 1-20 (MKFVLLFGVLLVTLFSYSSA). Positions 21–44 (EMLDDFDQADEDELLSLIEKEEAR) are excised as a propeptide. 4 disulfides stabilise this stretch: Cys47/Cys62, Cys54/Cys71, Cys61/Cys89, and Cys73/Cys87.

The protein belongs to the neurotoxin 19 (CSTX) family. 03 subfamily. In terms of tissue distribution, expressed by the venom gland.

It is found in the secreted. The protein is U1-lycotoxin-Ls1dd of Lycosa singoriensis (Wolf spider).